Here is a 190-residue protein sequence, read N- to C-terminus: Nucleoside triphosphate pyrophosphatase (190 aa).

The Proton acceptor role is filled by aspartate 69.

The protein belongs to the Maf family. A divalent metal cation serves as cofactor.

Its subcellular location is the cytoplasm. It catalyses the reaction a ribonucleoside 5'-triphosphate + H2O = a ribonucleoside 5'-phosphate + diphosphate + H(+). It carries out the reaction a 2'-deoxyribonucleoside 5'-triphosphate + H2O = a 2'-deoxyribonucleoside 5'-phosphate + diphosphate + H(+). Nucleoside triphosphate pyrophosphatase. May have a dual role in cell division arrest and in preventing the incorporation of modified nucleotides into cellular nucleic acids. The sequence is that of Nucleoside triphosphate pyrophosphatase from Helicobacter pylori (strain P12).